Reading from the N-terminus, the 190-residue chain is GTP cyclohydrolase 1 (190 aa).

The Zn(2+) site is built by cysteine 75, histidine 78, and cysteine 146.

Belongs to the GTP cyclohydrolase I family. As to quaternary structure, toroid-shaped homodecamer, composed of two pentamers of five dimers.

It catalyses the reaction GTP + H2O = 7,8-dihydroneopterin 3'-triphosphate + formate + H(+). It functions in the pathway cofactor biosynthesis; 7,8-dihydroneopterin triphosphate biosynthesis; 7,8-dihydroneopterin triphosphate from GTP: step 1/1. This chain is GTP cyclohydrolase 1, found in Campylobacter curvus (strain 525.92).